The chain runs to 1173 residues: Inner capsid protein VP3 (1173 aa).

Residues 1-53 are disordered; it reads MSNLPKPASHFEPEKNVDDKGNVTGSAPPVSKDTPTQQASVSLPNQEEPTQQT. Residues 9 to 21 show a composition bias toward basic and acidic residues; it reads SHFEPEKNVDDKG. Over residues 33–53 the composition is skewed to polar residues; sequence DTPTQQASVSLPNQEEPTQQT.

It belongs to the turreted BTV-fold inner capsid family. Homodecamer; each decamer is made up of two conformers of VP2, called VP2A and VP2B. 12 homodecamers assemble to form an icosahedral capsid.

It is found in the virion. Functionally, inner capsid protein that self-assembles to form an icosahedral capsid with a T=2 symmetry, which consists of 120 copies of VP2, with channels at each of its five-fold vertices. This capsid constitutes the innermost concentric layer of the viral mature particle. This chain is Inner capsid protein VP3, found in Rice ragged stunt virus (isolate Thailand) (RRSV).